A 304-amino-acid polypeptide reads, in one-letter code: Cell surface-binding protein OPG105 (304 aa).

In terms of domain architecture, Alpha-carbonic anhydrase spans 1–235 (MSQQLSPINI…NDDTEVYYSG (235 aa)). The Virion surface portion of the chain corresponds to 1 to 275 (MSQQLSPINI…YQKYIEGNKT (275 aa)). The chain crosses the membrane as a helical span at residues 276–294 (FAIIAIVFVYILTAILFLM). At 295–304 (SRRYSREKQN) the chain is on the intravirion side.

It belongs to the alpha-carbonic anhydrase family. In terms of assembly, homodimer; disulfide-linked. Apparently non-glycosylated.

The protein resides in the virion membrane. Its function is as follows. Binds to chondroitin sulfate on the cell surface to provide virion attachment to target cell. The sequence is that of Cell surface-binding protein OPG105 (OPG105) from Homo sapiens (Human).